A 63-amino-acid polypeptide reads, in one-letter code: Large ribosomal subunit protein bL28 (63 aa).

The disordered stretch occupies residues 1–20; sequence MSKRCAITGKGPMVGNNVSH.

The protein belongs to the bacterial ribosomal protein bL28 family.

This chain is Large ribosomal subunit protein bL28, found in Campylobacter fetus subsp. fetus (strain 82-40).